The following is a 104-amino-acid chain: Naphthalene 1,2-dioxygenase system, ferredoxin component (104 aa).

In terms of domain architecture, Rieske spans 6–101 (IDAVALYEIP…VKIEGQRVMI (96 aa)). Residues Cys45, His47, Cys64, and His67 each coordinate [2Fe-2S] cluster.

It belongs to the bacterial ring-hydroxylating dioxygenase ferredoxin component family. In terms of assembly, the naphthalene dioxygenase (NDO) multicomponent enzyme system is composed of an electron transfer component and a dioxygenase component (iron sulfur protein (ISP)). The electron transfer component is composed of a ferredoxin reductase (NdoR) and a ferredoxin (NdoA), and the dioxygenase component is formed of a heterohexamer (trimer of heterodimers) of three large alpha subunits (NdoB) and three small beta subunits (NdoC). It depends on [2Fe-2S] cluster as a cofactor.

It participates in aromatic compound metabolism; naphthalene degradation. Its function is as follows. Component of the naphthalene dioxygenase (NDO) multicomponent enzyme system which catalyzes the incorporation of both atoms of molecular oxygen into naphthalene to form cis-(1R,2S)-dihydroxy-1,2-dihydronaphthalene. Functions as an intermediate electron transfer protein via a specific interaction with iron sulfur protein components (ISP) (NdoB and NdoC). The protein is Naphthalene 1,2-dioxygenase system, ferredoxin component of Pseudomonas aeruginosa.